The primary structure comprises 159 residues: Neuroglobin-1 (159 aa).

The Globin domain occupies 3–151 (KLTEKEKELI…VVAAMSRGWA (149 aa)). Positions 66 and 98 each coordinate heme b.

Belongs to the globin family. As to quaternary structure, monomer. Homodimers and homotetramers. Mainly monomeric but also detected as part of homodimers and homotetramers.

It localises to the cytoplasm. Its subcellular location is the cytosol. It is found in the mitochondrion matrix. The enzyme catalyses Fe(III)-heme b-[protein] + nitric oxide + H2O = Fe(II)-heme b-[protein] + nitrite + 2 H(+). In terms of biological role, monomeric globin with a bis-histidyl six-coordinate heme-iron atom through which it can bind dioxygen, carbon monoxide and nitric oxide. Could help transport oxygen and increase its availability to the metabolically active neuronal tissues, though its low quantity in tissues as well as its high affinity for dioxygen, which may limit its oxygen-releasing ability, argue against it. The ferrous/deoxygenated form exhibits a nitrite reductase activity and it could produce nitric oxide which in turn inhibits cellular respiration in response to hypoxia. In its ferrous/deoxygenated state, it may also exhibit GDI (Guanine nucleotide Dissociation Inhibitor) activity toward heterotrimeric G-alpha proteins, thereby regulating signal transduction to facilitate neuroprotective responses in the wake of hypoxia and associated oxidative stress. In Oncorhynchus mykiss (Rainbow trout), this protein is Neuroglobin-1 (ngb1).